Reading from the N-terminus, the 122-residue chain is Large ribosomal subunit protein uL14 (122 aa).

This sequence belongs to the universal ribosomal protein uL14 family. Part of the 50S ribosomal subunit. Forms a cluster with proteins L3 and L19. In the 70S ribosome, L14 and L19 interact and together make contacts with the 16S rRNA in bridges B5 and B8.

In terms of biological role, binds to 23S rRNA. Forms part of two intersubunit bridges in the 70S ribosome. This chain is Large ribosomal subunit protein uL14, found in Coxiella burnetii (strain RSA 331 / Henzerling II).